The chain runs to 145 residues: UPF0735 ACT domain-containing protein CKL_0858 (145 aa).

The region spanning 69-144 (TLGLTLAHKA…SVIKVNLAAV (76 aa)) is the ACT domain.

The protein belongs to the UPF0735 family.

The protein is UPF0735 ACT domain-containing protein CKL_0858 of Clostridium kluyveri (strain ATCC 8527 / DSM 555 / NBRC 12016 / NCIMB 10680 / K1).